The primary structure comprises 293 residues: Glutamyl-Q tRNA(Asp) synthetase (293 aa).

Residues 8–12 (RFAPT) and Glu-44 each bind L-glutamate. A 'HIGH' region motif is present at residues 11 to 21 (PTPSGYLHFGS). Cys-100, Cys-102, Tyr-114, and Cys-118 together coordinate Zn(2+). The L-glutamate site is built by Tyr-171 and Arg-189. Positions 227 to 231 (KLGKS) match the 'KMSKS' region motif. Lys-230 is a binding site for ATP.

The protein belongs to the class-I aminoacyl-tRNA synthetase family. GluQ subfamily. It depends on Zn(2+) as a cofactor.

In terms of biological role, catalyzes the tRNA-independent activation of glutamate in presence of ATP and the subsequent transfer of glutamate onto a tRNA(Asp). Glutamate is transferred on the 2-amino-5-(4,5-dihydroxy-2-cyclopenten-1-yl) moiety of the queuosine in the wobble position of the QUC anticodon. This is Glutamyl-Q tRNA(Asp) synthetase from Pseudomonas paraeruginosa (strain DSM 24068 / PA7) (Pseudomonas aeruginosa (strain PA7)).